A 323-amino-acid chain; its full sequence is Ankyrin repeat and SOCS box protein 11 (323 aa).

ANK repeat units follow at residues 64–93 (ADRS…NVNL), 97–126 (NRVS…HVNG), 130–159 (HGAT…KAQL), 162–191 (HLAS…NIDQ), 195–224 (HLGT…NVNH), and 227–256 (WLDT…NLKC). The SOCS box domain maps to 273–323 (SVEQALLLREGPPALSQLCRLCVRKCLGRNCHKTIHKLYLPDPLEKFLLYQ).

Belongs to the ankyrin SOCS box (ASB) family. As to quaternary structure, substrate-recognition component of the ECS(ASB11) complex, composed of ASB11, CUL5, ELOB, ELOC and RNF7/RBX2.

The protein resides in the endoplasmic reticulum. It participates in protein modification; protein ubiquitination. Substrate-recognition component of a cullin-5-RING E3 ubiquitin-protein ligase complex (ECS complex, also named CRL5 complex), which mediates the ubiquitination and subsequent proteasomal degradation of target proteins, such as BIK, DIRAS2 and RPN1. The ECS(ASB11) complex acts as a regulator of the endoplasmic reticulum unfolded protein response by mediating ubiquitination and degradation of BIK. This Bos taurus (Bovine) protein is Ankyrin repeat and SOCS box protein 11 (ASB11).